Reading from the N-terminus, the 490-residue chain is Myocilin (490 aa).

The N-terminal stretch at 1 to 18 (MPATQLLLLACLVWGLGA) is a signal peptide. An N-linked (GlcNAc...) asparagine glycan is attached at Asn43. The stretch at 52–169 (QAMSAIQDLQ…SQEVARLRRG (118 aa)) forms a coiled coil. Positions 146-157 (REENEDLARRLD) are enriched in basic and acidic residues. Residues 146 to 188 (REENEDLARRLDSSSQEVARLRRGQCPQARGTPQDVPSGSREV) form a disordered region. One can recognise an Olfactomedin-like domain in the interval 230–489 (GCGELVWVGE…MVTYDLRLSE (260 aa)). Cys231 and Cys419 are joined by a disulfide. Ca(2+) contacts are provided by Asp366, Asn414, Ala415, Val463, and Asp464. Positions 488-490 (SEM) match the Microbody targeting signal motif.

As to quaternary structure, homodimer (via N-terminus). Can also form higher oligomers. Interacts with OLFM3, FN1, NRCAM, GLDN and NFASC. Interacts (via N-terminus) with MYL2. Interacts with SFRP1, FRZB, FZD7, FZD10, FZD1 and WIF1; regulates Wnt signaling. Interacts with SNTA1; regulates muscle hypertrophy. Interacts with ERBB2 and ERBB3; activates ERBB2-ERBB3 signaling pathway. Interacts with SNCG; affects its secretion and its aggregation. In terms of processing, palmitoylated. Post-translationally, undergoes a calcium-dependent proteolytic cleavage at Arg-212 by CAPN2 in the endoplasmic reticulum. The result is the production of two fragments, one of 35 kDa containing the C-terminal olfactomedin-like domain, and another of 20 kDa containing the N-terminal leucine zipper-like domain. Glycosylated. As to expression, expressed in optic nerve head, ciliary body and retina.

The protein localises to the secreted. The protein resides in the golgi apparatus. It is found in the cytoplasmic vesicle. It localises to the extracellular space. Its subcellular location is the extracellular matrix. The protein localises to the extracellular exosome. The protein resides in the mitochondrion. It is found in the mitochondrion intermembrane space. It localises to the mitochondrion inner membrane. Its subcellular location is the mitochondrion outer membrane. The protein localises to the rough endoplasmic reticulum. The protein resides in the cell projection. It is found in the cilium. It localises to the endoplasmic reticulum. Functionally, secreted glycoprotein regulating the activation of different signaling pathways in adjacent cells to control different processes including cell adhesion, cell-matrix adhesion, cytoskeleton organization and cell migration. Promotes substrate adhesion, spreading and formation of focal contacts. Negatively regulates cell-matrix adhesion and stress fiber assembly through Rho protein signal transduction. Modulates the organization of actin cytoskeleton by stimulating the formation of stress fibers through interactions with components of Wnt signaling pathways. Promotes cell migration through activation of PTK2 and the downstream phosphatidylinositol 3-kinase signaling. Plays a role in bone formation and promotes osteoblast differentiation in a dose-dependent manner through mitogen-activated protein kinase signaling. Mediates myelination in the peripheral nervous system through ERBB2/ERBB3 signaling. Plays a role as a regulator of muscle hypertrophy through the components of dystrophin-associated protein complex. Involved in positive regulation of mitochondrial depolarization. Plays a role in neurite outgrowth. May participate in the obstruction of fluid outflow in the trabecular meshwork. The sequence is that of Myocilin (MYOC) from Felis catus (Cat).